The following is a 178-amino-acid chain: CCHC-type zinc finger nucleic acid binding protein (178 aa).

An N-acetylserine modification is found at Ser2. The CCHC-type 1 zinc-finger motif lies at 4-21; sequence NECFKCGRSGHWARECPT. Residue Lys8 is modified to N6-acetyllysine. Residues Arg25 and Arg27 each carry the omega-N-methylarginine; by PRMT1 modification. The tract at residues 25-38 is RNA-binding Arg/Gly-rich region (RGG-box); the sequence is RGRGMRSRGRGGFT. An omega-N-methylarginine mark is found at Arg32 and Arg34. Phosphoserine is present on Ser49. CCHC-type zinc fingers lie at residues 52–69, 72–90, 97–114, 118–135, 136–153, and 157–174; these read DICY…DCDL, DEAC…DCKE, QCCY…DCDH, QKCY…DCTK, VKCY…NCSK, and VNCY…ECTI. An omega-N-methylarginine mark is found at Asp72, Gly79, and Arg80.

In terms of assembly, associates with the 40S ribosomal subunit, the 80S ribosome and with polysomes. In terms of processing, arginine methylation by PRMT1 in the Arg/Gly-rich region impedes RNA binding.

The protein resides in the nucleus. It is found in the cytoplasm. The protein localises to the endoplasmic reticulum. In terms of biological role, single-stranded DNA-binding protein that preferentially binds to the sterol regulatory element (SRE) sequence 5'-GTGCGGTG-3', and thereby mediates transcriptional repression. Has a role as transactivator of the Myc promoter. Binds single-stranded RNA in a sequence-specific manner. Binds G-rich elements in target mRNA coding sequences. Prevents G-quadruplex structure formation in vitro, suggesting a role in supporting translation by resolving stable structures on mRNAs. The polypeptide is CCHC-type zinc finger nucleic acid binding protein (Mus musculus (Mouse)).